The following is a 327-amino-acid chain: Transaldolase (327 aa).

The Schiff-base intermediate with substrate role is filled by K132.

The protein belongs to the transaldolase family. Type 1 subfamily.

The protein resides in the cytoplasm. The enzyme catalyses D-sedoheptulose 7-phosphate + D-glyceraldehyde 3-phosphate = D-erythrose 4-phosphate + beta-D-fructose 6-phosphate. The protein operates within carbohydrate degradation; pentose phosphate pathway; D-glyceraldehyde 3-phosphate and beta-D-fructose 6-phosphate from D-ribose 5-phosphate and D-xylulose 5-phosphate (non-oxidative stage): step 2/3. Its function is as follows. Transaldolase is important for the balance of metabolites in the pentose-phosphate pathway. This Chlamydia trachomatis serovar D (strain ATCC VR-885 / DSM 19411 / UW-3/Cx) protein is Transaldolase.